The chain runs to 233 residues: Coenzyme Q-binding protein COQ10 homolog, mitochondrial (233 aa).

The transit peptide at 1–34 (MAEKATSLFLRAMEISEKQSFDVMRRNSSCTIRH) directs the protein to the mitochondrion.

This sequence belongs to the COQ10 family. In terms of assembly, interacts with coenzyme Q.

The protein resides in the mitochondrion inner membrane. Functionally, required for the function of coenzyme Q in the respiratory chain. May serve as a chaperone or may be involved in the transport of Q6 from its site of synthesis to the catalytic sites of the respiratory complexes. In Danio rerio (Zebrafish), this protein is Coenzyme Q-binding protein COQ10 homolog, mitochondrial.